The chain runs to 403 residues: MPLFKSRIKSALVHRREQGLTRQLKVLENSNGPLLTSEGSSFINFSSNDYLGLANDSELVDAWQVGLSQYGAGSAASPLVTGFSPAHRNLETQLCEWLGFERAILFNSGFSANQALLFSLLEKDDFLLQDKLNHASLMEAGMLSPATMKRFKHNDTQHLESLLSQTPQSLVVTEGVFSMDGDQAPLRQISSLTNQYDSWLAVDDAHGIGVLGDNGAGSCNAAQISPDILVVTFGKAFGLSGAAILCSSEVGDYLTQFARHHVYSTAMPPSQAVALSHACQMIQTQEWRREKLTELGALYAEQMNGVKGFIDTQTPIKPFLIGEAQAALSIAEELKRNQVWVTAIRSPTVPIGTARLRITLTANHSQEQILQLTDSLLQAIERSNDSGSKPSIESSFELKKEAQ.

Arg-22 serves as a coordination point for substrate. 109-110 serves as a coordination point for pyridoxal 5'-phosphate; the sequence is GF. His-134 provides a ligand contact to substrate. Positions 178, 206, and 232 each coordinate pyridoxal 5'-phosphate. Lys-235 carries the post-translational modification N6-(pyridoxal phosphate)lysine. Thr-348 serves as a coordination point for substrate. The interval 383-403 is disordered; the sequence is SNDSGSKPSIESSFELKKEAQ. Positions 385 to 394 are enriched in polar residues; sequence DSGSKPSIES.

It belongs to the class-II pyridoxal-phosphate-dependent aminotransferase family. BioF subfamily. In terms of assembly, homodimer. Pyridoxal 5'-phosphate is required as a cofactor.

The catalysed reaction is 6-carboxyhexanoyl-[ACP] + L-alanine + H(+) = (8S)-8-amino-7-oxononanoate + holo-[ACP] + CO2. Its pathway is cofactor biosynthesis; biotin biosynthesis. Catalyzes the decarboxylative condensation of pimeloyl-[acyl-carrier protein] and L-alanine to produce 8-amino-7-oxononanoate (AON), [acyl-carrier protein], and carbon dioxide. The polypeptide is 8-amino-7-oxononanoate synthase (Vibrio atlanticus (strain LGP32) (Vibrio splendidus (strain Mel32))).